We begin with the raw amino-acid sequence, 237 residues long: Ribosomal RNA large subunit methyltransferase E (237 aa).

S-adenosyl-L-methionine contacts are provided by Gly-76, Trp-78, Asp-99, Asp-115, and Asp-139. Lys-179 serves as the catalytic Proton acceptor.

This sequence belongs to the class I-like SAM-binding methyltransferase superfamily. RNA methyltransferase RlmE family.

Its subcellular location is the cytoplasm. It catalyses the reaction uridine(2552) in 23S rRNA + S-adenosyl-L-methionine = 2'-O-methyluridine(2552) in 23S rRNA + S-adenosyl-L-homocysteine + H(+). Its function is as follows. Specifically methylates the uridine in position 2552 of 23S rRNA at the 2'-O position of the ribose in the fully assembled 50S ribosomal subunit. In Rhodopseudomonas palustris (strain TIE-1), this protein is Ribosomal RNA large subunit methyltransferase E.